A 563-amino-acid polypeptide reads, in one-letter code: BOS complex subunit NCLN (563 aa).

The N-terminal stretch at 1–42 is a signal peptide; the sequence is MLEEAGEVLENVLKASCLPLGFIVFLPAVLLLVAPPLPAADA. Over 43 to 522 the chain is Lumenal; the sequence is AHEFTVYRMQ…VMNAYRVKPA (480 aa). N-linked (GlcNAc...) asparagine glycans are attached at residues asparagine 241 and asparagine 428. A helical membrane pass occupies residues 523–543; the sequence is IFDLLLALCIGAYLGMAYTAV. At 544–563 the chain is on the cytoplasmic side; sequence QHFHVLYKTVQRLLLKAKAQ.

Belongs to the nicastrin family. As to quaternary structure, component of the back of Sec61 (BOS) complex, composed of NCLN/Nicalin, NOMO1 and TMEM147. The BOS complex is part of the multi-pass translocon (MPT) complex, composed of three subcomplexes, the GEL complex (composed of RAB5IF/OPTI and TMCO1), the BOS complex (composed of NCLN/Nicalin, NOMO1 and TMEM147) and the PAT complex (composed of WDR83OS/Asterix and CCDC47). The MPT complex associates with the SEC61 complex.

It localises to the endoplasmic reticulum membrane. In terms of biological role, component of the multi-pass translocon (MPT) complex that mediates insertion of multi-pass membrane proteins into the lipid bilayer of membranes. The MPT complex takes over after the SEC61 complex: following membrane insertion of the first few transmembrane segments of proteins by the SEC61 complex, the MPT complex occludes the lateral gate of the SEC61 complex to promote insertion of subsequent transmembrane regions. May antagonize Nodal signaling and subsequent organization of axial structures during mesodermal patterning, via its interaction with NOMO. The chain is BOS complex subunit NCLN (Ncln) from Mus musculus (Mouse).